The primary structure comprises 104 residues: Thioredoxin (104 aa).

Positions 2-104 (AIVKATDQSF…ALQELVNKHL (103 aa)) constitute a Thioredoxin domain. A disulfide bridge connects residues Cys-29 and Cys-32.

This sequence belongs to the thioredoxin family.

In terms of biological role, participates in various redox reactions through the reversible oxidation of its active center dithiol to a disulfide and catalyzes dithiol-disulfide exchange reactions. This is Thioredoxin (trxA) from Bacillus subtilis (strain 168).